Here is a 450-residue protein sequence, read N- to C-terminus: uncharacterized protein (450 aa).

The span at Glu-387 to Lys-416 shows a compositional bias: basic and acidic residues. The disordered stretch occupies residues Glu-387 to Glu-439.

This is an uncharacterized protein from Saccharomyces cerevisiae (strain ATCC 204508 / S288c) (Baker's yeast).